Consider the following 349-residue polypeptide: Glycerol-3-phosphate dehydrogenase [NAD(P)+] (349 aa).

NADPH is bound by residues W16, R36, and K110. The sn-glycerol 3-phosphate site is built by K110, G138, and T140. An NADPH-binding site is contributed by A142. K193, D246, S256, R257, and N258 together coordinate sn-glycerol 3-phosphate. The active-site Proton acceptor is K193. R257 contacts NADPH. NADPH is bound by residues V281 and E283.

Belongs to the NAD-dependent glycerol-3-phosphate dehydrogenase family.

It localises to the cytoplasm. It catalyses the reaction sn-glycerol 3-phosphate + NAD(+) = dihydroxyacetone phosphate + NADH + H(+). It carries out the reaction sn-glycerol 3-phosphate + NADP(+) = dihydroxyacetone phosphate + NADPH + H(+). Its pathway is membrane lipid metabolism; glycerophospholipid metabolism. Functionally, catalyzes the reduction of the glycolytic intermediate dihydroxyacetone phosphate (DHAP) to sn-glycerol 3-phosphate (G3P), the key precursor for phospholipid synthesis. This chain is Glycerol-3-phosphate dehydrogenase [NAD(P)+], found in Rhodospirillum rubrum (strain ATCC 11170 / ATH 1.1.1 / DSM 467 / LMG 4362 / NCIMB 8255 / S1).